The following is a 126-amino-acid chain: UPF0325 protein VFMJ11_2099 (126 aa).

The protein belongs to the UPF0325 family.

This chain is UPF0325 protein VFMJ11_2099, found in Aliivibrio fischeri (strain MJ11) (Vibrio fischeri).